The following is a 325-amino-acid chain: Probable transcription factor At4g01260 (325 aa).

Residues 1–98 are disordered; that stretch reads MAPKQLKKIE…SMGEEDVKKK (98 aa). Low complexity-rich tracts occupy residues 23–32 and 49–69; these read ASSGESATSG and KPVV…ESST. Over residues 73–83 the composition is skewed to basic and acidic residues; it reads RSFEKTDEMSK.

It belongs to the GeBP family.

In Arabidopsis thaliana (Mouse-ear cress), this protein is Probable transcription factor At4g01260.